The primary structure comprises 148 residues: Large ribosomal subunit protein uL15 (148 aa).

The span at 1 to 30 (MPSRLRKTRKLRGHVSHGHGRIGKHRKHPG) shows a compositional bias: basic residues. The tract at residues 1-38 (MPSRLRKTRKLRGHVSHGHGRIGKHRKHPGGRGNAGGL) is disordered. The residue at position 39 (His-39) is a (3S)-3-hydroxyhistidine. An N6-acetyllysine mark is found at Lys-47 and Lys-55. Ser-68 is modified (phosphoserine). Residue Lys-110 is modified to N6-acetyllysine.

The protein belongs to the universal ribosomal protein uL15 family. Post-translationally, hydroxylated on His-39 by MINA.

The sequence is that of Large ribosomal subunit protein uL15 (RPL27A) from Pan troglodytes (Chimpanzee).